A 457-amino-acid polypeptide reads, in one-letter code: MSFDLLKDINKKVHFIGIGGVSMSGLAAVLLNAGYKVSGSDSKESEITNRLKEEGAKIYIGHSKDNLQDVDVVVYTAAIPSDNPEIIKAKEDNLILMDRAEFLGQIMKGHKFNVAVAGTHGKTTTTSMISHVALSADLDPTILVGGDLDIIHGNFRVGNSEYFITEACEYKQSFLRFFPYVGIILNIDADHLDFYKDINHIKDTFKQFVRLIPNDGYIIGNADDEKVMEVLEVAKCNVLTYGINNGDIQARNIEFNEKGCATFDVFRNEEKLLSLSLNVPGMHNVSNSLSAVCLAEIFNINADSIVSGLSSFGGAHKRFEYKGTKNDITVIDDYAHHPVEIKATLSTAKKMNHNRIVCVFQPHTYTRTKTLFNDFVKCFDDCDELVLMDIYAAREKDLGEINSDQLGDAIRAHGVKCTNVHSHEEALEYVNANLSKGDLLLTVGAGDVVKVGELFLK.

ATP is bound at residue 118-124; the sequence is GTHGKTT.

The protein belongs to the MurCDEF family.

It is found in the cytoplasm. The catalysed reaction is UDP-N-acetyl-alpha-D-muramate + L-alanine + ATP = UDP-N-acetyl-alpha-D-muramoyl-L-alanine + ADP + phosphate + H(+). Its pathway is cell wall biogenesis; peptidoglycan biosynthesis. Its function is as follows. Cell wall formation. The chain is UDP-N-acetylmuramate--L-alanine ligase from Clostridium perfringens (strain 13 / Type A).